A 60-amino-acid chain; its full sequence is Large ribosomal subunit protein uL30 (60 aa).

Belongs to the universal ribosomal protein uL30 family. In terms of assembly, part of the 50S ribosomal subunit.

This is Large ribosomal subunit protein uL30 from Leptothrix cholodnii (strain ATCC 51168 / LMG 8142 / SP-6) (Leptothrix discophora (strain SP-6)).